The primary structure comprises 325 residues: Post-GPI attachment to proteins factor 2-like (325 aa).

The next 6 membrane-spanning stretches (helical) occupy residues 80–100, 130–150, 171–191, 205–225, 243–263, and 276–296; these read VVTA…AYVF, YFWR…AFVY, LLIT…GGVT, IFIT…KLNG, WKKI…VFFA, and WFAF…FTII.

Belongs to the PGAP2 family.

The protein resides in the membrane. This Drosophila melanogaster (Fruit fly) protein is Post-GPI attachment to proteins factor 2-like.